We begin with the raw amino-acid sequence, 538 residues long: Phosphoenolpyruvate carboxykinase (ATP) (538 aa).

Residues arginine 62, tyrosine 203, and lysine 209 each contribute to the substrate site. ATP contacts are provided by residues lysine 209, histidine 228, and 244–252; that span reads GLSGTGKTT. The Mn(2+) site is built by lysine 209 and histidine 228. Aspartate 265 lines the Mn(2+) pocket. Residues glutamate 293, arginine 329, 445-446, and threonine 451 each bind ATP; that span reads RI. Arginine 329 serves as a coordination point for substrate.

This sequence belongs to the phosphoenolpyruvate carboxykinase (ATP) family. Monomer. It depends on Mn(2+) as a cofactor.

The protein localises to the cytoplasm. The enzyme catalyses oxaloacetate + ATP = phosphoenolpyruvate + ADP + CO2. Its pathway is carbohydrate biosynthesis; gluconeogenesis. Involved in the gluconeogenesis. Catalyzes the conversion of oxaloacetate (OAA) to phosphoenolpyruvate (PEP) through direct phosphoryl transfer between the nucleoside triphosphate and OAA. This Haemophilus ducreyi (strain 35000HP / ATCC 700724) protein is Phosphoenolpyruvate carboxykinase (ATP).